The following is a 111-amino-acid chain: Cornifelin homolog A (111 aa).

It belongs to the cornifelin family.

This chain is Cornifelin homolog A (cnfn-a), found in Xenopus laevis (African clawed frog).